Consider the following 332-residue polypeptide: Catabolite control protein A (332 aa).

One can recognise an HTH lacI-type domain in the interval 1–57 (MNVTIYDVAREASVSMATVSRVVNGNPNVKPSTRKKVLETIERLGYRPNAVARGLAS). The H-T-H motif DNA-binding region spans 5–24 (IYDVAREASVSMATVSRVVN).

Its function is as follows. Global transcriptional regulator of carbon catabolite repression (CCR) and carbon catabolite activation (CCA), which ensures optimal energy usage under diverse conditions. The sequence is that of Catabolite control protein A (ccpA) from Priestia megaterium (Bacillus megaterium).